A 192-amino-acid chain; its full sequence is Elongation factor P (192 aa).

Belongs to the elongation factor P family.

It localises to the cytoplasm. It participates in protein biosynthesis; polypeptide chain elongation. Its function is as follows. Involved in peptide bond synthesis. Stimulates efficient translation and peptide-bond synthesis on native or reconstituted 70S ribosomes in vitro. Probably functions indirectly by altering the affinity of the ribosome for aminoacyl-tRNA, thus increasing their reactivity as acceptors for peptidyl transferase. The sequence is that of Elongation factor P (efp) from Borreliella burgdorferi (strain ATCC 35210 / DSM 4680 / CIP 102532 / B31) (Borrelia burgdorferi).